Consider the following 181-residue polypeptide: Thioredoxin-like protein CITRX1, chloroplastic (181 aa).

The tract at residues 1-20 (MQAATLSFHPSAPPPQTSAC) is disordered. A chloroplast-targeting transit peptide spans 1 to 70 (MQAATLSFHP…PAVATGKYVR (70 aa)). A Thioredoxin domain is found at 71 to 181 (EDYLVKKVSA…MMRDIINNDL (111 aa)). Catalysis depends on nucleophile residues Cys104 and Cys107. Cys104 and Cys107 are joined by a disulfide.

The protein belongs to the thioredoxin family. Plant CITRX-type subfamily.

It localises to the plastid. Its subcellular location is the chloroplast. Functionally, probable thiol-disulfide oxidoreductase that may play a role in proper chloroplast development. In Nicotiana benthamiana, this protein is Thioredoxin-like protein CITRX1, chloroplastic.